Consider the following 347-residue polypeptide: Merozoite surface protein P12 (347 aa).

The N-terminal stretch at 1–25 is a signal peptide; sequence MIKLSKKYCLGISFVLYILLSVCEG. 6-Cys domains follow at residues 27-172 and 175-305; these read KNLT…IPSL and KVKG…ISSS. Asn28 is a glycosylation site (N-linked (GlcNAc...) asparagine). Intrachain disulfides connect Cys31–Cys53, Cys67–Cys138, and Cys81–Cys136. Asn147, Asn200, Asn228, Asn242, Asn265, and Asn322 each carry an N-linked (GlcNAc...) asparagine glycan. Intrachain disulfides connect Cys179-Cys211, Cys225-Cys286, and Cys236-Cys284. Residue Asn322 is the site of GPI-anchor amidated asparagine attachment. Residues 323 to 347 constitute a propeptide, removed in mature form; the sequence is SSFLTLSSYCAFITFIITSFLSFIL.

As to quaternary structure, heterodimer; heterodimerizes with PF41. May form an antiparallel heterodimer with PF41. Processed into a soluble form.

The protein resides in the cell surface. It localises to the cell membrane. This chain is Merozoite surface protein P12 (PF12), found in Plasmodium falciparum (isolate 3D7).